Reading from the N-terminus, the 212-residue chain is ATP-dependent Clp protease proteolytic subunit (212 aa).

The active-site Nucleophile is the S107. The active site involves H132.

It belongs to the peptidase S14 family. Fourteen ClpP subunits assemble into 2 heptameric rings which stack back to back to give a disk-like structure with a central cavity, resembling the structure of eukaryotic proteasomes.

It is found in the cytoplasm. The catalysed reaction is Hydrolysis of proteins to small peptides in the presence of ATP and magnesium. alpha-casein is the usual test substrate. In the absence of ATP, only oligopeptides shorter than five residues are hydrolyzed (such as succinyl-Leu-Tyr-|-NHMec, and Leu-Tyr-Leu-|-Tyr-Trp, in which cleavage of the -Tyr-|-Leu- and -Tyr-|-Trp bonds also occurs).. Functionally, cleaves peptides in various proteins in a process that requires ATP hydrolysis. Has a chymotrypsin-like activity. Plays a major role in the degradation of misfolded proteins. This chain is ATP-dependent Clp protease proteolytic subunit, found in Pseudoalteromonas atlantica (strain T6c / ATCC BAA-1087).